We begin with the raw amino-acid sequence, 901 residues long: Vacuolar import and degradation protein 22 (901 aa).

A compositionally biased stretch (polar residues) spans 1–10 (MRAMDTQVQS). The tract at residues 1 to 54 (MRAMDTQVQSAERGLVLPPMNSTVSSATAATTATNTDTDTDGDRDEERESLAED) is disordered. A glycan (N-linked (GlcNAc...) asparagine) is linked at N21. The segment covering 27-37 (ATAATTATNTD) has biased composition (low complexity). The BED-type zinc finger occupies 66-122 (RDRSRYLGHFLGVDKMLEAVKCKYCGVIIRRQGNSISMAEASQTHLWSTHKIDPNAN). C87, C90, H110, and H115 together coordinate Zn(2+). 2 N-linked (GlcNAc...) asparagine glycosylation sites follow: N242 and N291. Residues 381–401 (YYHNCIISIINSAILPLFGTP) form a helical membrane-spanning segment. 9 N-linked (GlcNAc...) asparagine glycosylation sites follow: N540, N645, N649, N652, N662, N669, N673, N688, and N722. The span at 646–677 (NSHNTSNHSNMNIHTDNQTNNINNRSGNNSDN) shows a compositional bias: low complexity. The segment at 646 to 727 (NSHNTSNHSN…NSNNNLSFGS (82 aa)) is disordered. Residues 679–688 (DNEHDNDNDN) are compositionally biased toward basic and acidic residues. The segment covering 718–727 (NSNNNLSFGS) has biased composition (low complexity).

This sequence belongs to the VID22 family. Post-translationally, glycosylated.

It localises to the cell membrane. The protein resides in the nucleus. Its function is as follows. Has a role in the negative regulation of gluconeogenesis. Imports fructose-1,6-bisphosphatase (FBPase) into the intermediate vacuole import and degradation (Vid) vesicles. This is an indirect role and requires cyclophilin A. The chain is Vacuolar import and degradation protein 22 (VID22) from Saccharomyces cerevisiae (strain ATCC 204508 / S288c) (Baker's yeast).